A 484-amino-acid polypeptide reads, in one-letter code: MQEGKNIWSLILAAIRKELSEEEFYIWFENLYFIDATDESIKISAPNSFHKNQVEKRFSKRIKEILTEKGHNTINVEFINPPKEPKTHSMELKNTSLKDISIQQDSPEKRTILNTHTKNIIEHTKHYVIKEDIHTKYRNPFLKKKYTFENFIIGPNNKLAYNASLSIAKNPGKKYNPCLIYGGVGLGKTHLLQSIGNKTEELHKEFKILYVTAENFLNEFVESIKTNETKRFKKKYRHLDMLLIDDIHDLQKKEGIQEELFHTFNALYEDNKQMVFTCDRQPSELINFTDRLKSRFTRGLNVDISKPNFELRVAIIEKKAEEDGIKVPKNILNLVAKKVTTNIRDLEAAVTKLKAHIDLEDIEIDTSIVDKIIKEIIAYENDKTNTNNTINIESIKKVILRELKLTNKDIEGNSKKPEITKARHIYAYLLRNFTELSTIEIGKIIGGKTHSTVLYSINKIDKERNNDLEINNLIIELMNKINKN.

The domain I, interacts with DnaA modulators stretch occupies residues 1-73 (MQEGKNIWSL…EILTEKGHNT (73 aa)). Residues 73 to 140 (TINVEFINPP…EDIHTKYRNP (68 aa)) form a domain II region. A domain III, AAA+ region region spans residues 141–357 (FLKKKYTFEN…AAVTKLKAHI (217 aa)). ATP-binding residues include Gly-185, Gly-187, Lys-188, and Thr-189. A domain IV, binds dsDNA region spans residues 358–484 (DLEDIEIDTS…IELMNKINKN (127 aa)).

Belongs to the DnaA family. Oligomerizes as a right-handed, spiral filament on DNA at oriC.

Its subcellular location is the cytoplasm. Its function is as follows. Plays an essential role in the initiation and regulation of chromosomal replication. ATP-DnaA binds to the origin of replication (oriC) to initiate formation of the DNA replication initiation complex once per cell cycle. Binds the DnaA box (a 9 base pair repeat at the origin) and separates the double-stranded (ds)DNA. Forms a right-handed helical filament on oriC DNA; dsDNA binds to the exterior of the filament while single-stranded (ss)DNA is stabiized in the filament's interior. The ATP-DnaA-oriC complex binds and stabilizes one strand of the AT-rich DNA unwinding element (DUE), permitting loading of DNA polymerase. After initiation quickly degrades to an ADP-DnaA complex that is not apt for DNA replication. Binds acidic phospholipids. The sequence is that of Chromosomal replication initiator protein DnaA from Borrelia turicatae (strain 91E135).